A 377-amino-acid chain; its full sequence is Nitric oxide reductase FlRd-NAD(+) reductase (377 aa).

This sequence belongs to the FAD-dependent oxidoreductase family. FAD serves as cofactor.

Its subcellular location is the cytoplasm. It catalyses the reaction 2 reduced [nitric oxide reductase rubredoxin domain] + NAD(+) + H(+) = 2 oxidized [nitric oxide reductase rubredoxin domain] + NADH. Its pathway is nitrogen metabolism; nitric oxide reduction. One of at least two accessory proteins for anaerobic nitric oxide (NO) reductase. Reduces the rubredoxin moiety of NO reductase. This is Nitric oxide reductase FlRd-NAD(+) reductase from Salmonella paratyphi C (strain RKS4594).